Reading from the N-terminus, the 879-residue chain is Phosphoenolpyruvate carboxylase (879 aa).

Catalysis depends on residues histidine 138 and lysine 545.

The protein belongs to the PEPCase type 1 family. Mg(2+) serves as cofactor.

The catalysed reaction is oxaloacetate + phosphate = phosphoenolpyruvate + hydrogencarbonate. Its function is as follows. Forms oxaloacetate, a four-carbon dicarboxylic acid source for the tricarboxylic acid cycle. The sequence is that of Phosphoenolpyruvate carboxylase from Haemophilus influenzae (strain PittEE).